We begin with the raw amino-acid sequence, 509 residues long: MQSWSRVYCTLAKRGHFNRIAHGLQGVSAVPLRTYADQPIDADVTVIGSGPGGYVAAIKAAQLGFKTVCIEKNETLGGTCLNVGCIPSKALLNNSHYYHMAHGKDFASRGIEMSEVRLNLEKMMEQKSNAVKALTGGIAHLFKQNKVVRVNGYGKITGKNQVTATKADGSTEVINTKNILIATGSEVTPFPGITIDEDTVVSSTGALSLKKVPEKMVVIGAGVIGVELGSVWQRLGADVTAVELLGHVGGIGIDMEVSKNFQRILQKQGFKFKLNTKVIGATKKSDGNIDVSIEAASGGKAEVITCDVLLVCIGRRPFTQNLGLEELGIELDPRGRIPVNTRFQTKIPNIYAIGDVVAGPMLAHKAEDEGIICVEGMAGGAVHIDYNCVPSVIYTHPEVAWVGKSEEQLKEEGIEYKVGKFPFAANSRAKTNADTDGMVKILGQKSTDRVLGAHIIGPGAGEMINEAALALEYGASCEDIARVCHAHPTLSEAFREANLAASFGKAINF.

The N-terminal 35 residues, 1-35, are a transit peptide targeting the mitochondrion; sequence MQSWSRVYCTLAKRGHFNRIAHGLQGVSAVPLRTY. An N6-acetyllysine; alternate modification is found at lysine 66. Residue lysine 66 is modified to N6-succinyllysine; alternate. Residues 71-80 and lysine 89 contribute to the FAD site; that span reads EKNETLGGTC. Cysteine 80 and cysteine 85 are oxidised to a cystine. N6-acetyllysine; alternate is present on residues lysine 104, lysine 122, lysine 132, and lysine 143. Residues lysine 104, lysine 122, lysine 132, and lysine 143 each carry the N6-succinyllysine; alternate modification. FAD is bound at residue glycine 154. An N6-succinyllysine mark is found at lysine 159 and lysine 166. 183-185 is an FAD binding site; sequence TGS. Residues 220 to 227 and glutamate 243 each bind NAD(+); that span reads GAGVIGVE. N6-succinyllysine occurs at positions 273 and 277. Position 278 (valine 278) interacts with NAD(+). Serine 285 and serine 297 each carry phosphoserine. Glycine 314 is a binding site for NAD(+). Lysine 346 carries the N6-acetyllysine modification. Residues aspartate 355 and 361–364 contribute to the FAD site; that span reads MLAH. An N6-acetyllysine; alternate modification is found at lysine 410. N6-succinyllysine; alternate is present on lysine 410. Residues lysine 417 and lysine 420 each carry the N6-acetyllysine modification. Lysine 430 bears the N6-succinyllysine mark. The active-site Proton acceptor is histidine 487. Position 502 is a phosphoserine (serine 502). Residue lysine 505 is modified to N6-acetyllysine; alternate. Lysine 505 carries the post-translational modification N6-succinyllysine; alternate.

The protein belongs to the class-I pyridine nucleotide-disulfide oxidoreductase family. In terms of assembly, homodimer. Part of the multimeric pyruvate dehydrogenase complex that contains multiple copies of pyruvate dehydrogenase (subunits PDHA (PDHA1 or PDHA2) and PDHB, E1), dihydrolipoamide acetyltransferase (DLAT, E2) and lipoamide dehydrogenase (DLD, E3). These subunits are bound to an inner core composed of about 48 DLAT and 12 PDHX molecules (by non covalent bonds). The 2-oxoglutarate dehydrogenase complex is composed of OGDH (2-oxoglutarate dehydrogenase; E1), DLST (dihydrolipoamide succinyltransferase; E2), DLD (dihydrolipoamide dehydrogenase; E3) and the assembly factor KGD4. It contains multiple copies of the three enzymatic components (E1, E2 and E3). In the nucleus, the 2-oxoglutarate dehydrogenase complex associates with KAT2A. Interacts with PDHX. FAD is required as a cofactor. In terms of processing, tyrosine phosphorylated. As to expression, expressed in heart (at protein level).

The protein resides in the mitochondrion matrix. It is found in the nucleus. The protein localises to the cell projection. Its subcellular location is the cilium. It localises to the flagellum. The protein resides in the cytoplasmic vesicle. It is found in the secretory vesicle. The protein localises to the acrosome. The catalysed reaction is N(6)-[(R)-dihydrolipoyl]-L-lysyl-[protein] + NAD(+) = N(6)-[(R)-lipoyl]-L-lysyl-[protein] + NADH + H(+). In terms of biological role, lipoamide dehydrogenase is a component of the glycine cleavage system as well as an E3 component of three alpha-ketoacid dehydrogenase complexes (pyruvate-, alpha-ketoglutarate-, and branched-chain amino acid-dehydrogenase complex). The 2-oxoglutarate dehydrogenase complex is mainly active in the mitochondrion. A fraction of the 2-oxoglutarate dehydrogenase complex also localizes in the nucleus and is required for lysine succinylation of histones: associates with KAT2A on chromatin and provides succinyl-CoA to histone succinyltransferase KAT2A. In monomeric form may have additional moonlighting function as serine protease. Involved in the hyperactivation of spermatazoa during capacitation and in the spermatazoal acrosome reaction. The sequence is that of Dihydrolipoyl dehydrogenase, mitochondrial (DLD) from Sus scrofa (Pig).